Here is a 198-residue protein sequence, read N- to C-terminus: SCO2-like protein RF_0043 (198 aa).

Belongs to the SCO1/2 family.

This is SCO2-like protein RF_0043 from Rickettsia felis (strain ATCC VR-1525 / URRWXCal2) (Rickettsia azadi).